The sequence spans 81 residues: Cytochrome b559 subunit alpha (81 aa).

Residues Val-21–Trp-35 traverse the membrane as a helical segment. His-23 contacts heme.

It belongs to the PsbE/PsbF family. In terms of assembly, heterodimer of an alpha subunit and a beta subunit. PSII is composed of 1 copy each of membrane proteins PsbA, PsbB, PsbC, PsbD, PsbE, PsbF, PsbH, PsbI, PsbJ, PsbK, PsbL, PsbM, PsbT, PsbX, PsbY, PsbZ, Psb30/Ycf12, at least 3 peripheral proteins of the oxygen-evolving complex and a large number of cofactors. It forms dimeric complexes. The cofactor is heme b.

Its subcellular location is the plastid. It localises to the chloroplast thylakoid membrane. This b-type cytochrome is tightly associated with the reaction center of photosystem II (PSII). PSII is a light-driven water:plastoquinone oxidoreductase that uses light energy to abstract electrons from H(2)O, generating O(2) and a proton gradient subsequently used for ATP formation. It consists of a core antenna complex that captures photons, and an electron transfer chain that converts photonic excitation into a charge separation. The polypeptide is Cytochrome b559 subunit alpha (Tetradesmus obliquus (Green alga)).